Here is a 341-residue protein sequence, read N- to C-terminus: Muscleblind-like protein 1 (341 aa).

A Phosphothreonine modification is found at Thr-6. 4 C3H1-type zinc fingers span residues 13–41 (WLTLEVCREFQRGTCSRPDTECKFAHPSK), 47–73 (NGRVIACFDSLKGRCSRENCKYLHPPP), 178–206 (TDRLEVCREYQRGNCNRGENDCRFAHPAD), and 214–240 (DNTVTVCMDYIKGRCSREKCKYFHPPA).

This sequence belongs to the muscleblind family. As to quaternary structure, interacts with DDX1 and YBX1. Interacts with HNRNPH1; the interaction in RNA-independent. Interacts with RBPMS; the interaction allows cooperative assembly of RNA-bound stable cell-specific alternative splicing regulatory complexes. Highly expressed in cardiac and skeletal muscle. Weakly expressed in heart and eye (at protein level).

Its subcellular location is the nucleus. The protein resides in the cytoplasm. It is found in the cytoplasmic granule. Its function is as follows. Mediates pre-mRNA alternative splicing regulation. Acts either as activator or repressor of splicing on specific pre-mRNA targets. Inhibits cardiac troponin-T (TNNT2) pre-mRNA exon inclusion but induces insulin receptor (IR) pre-mRNA exon inclusion in muscle. Antagonizes the alternative splicing activity pattern of CELF proteins. Regulates the TNNT2 exon 5 skipping through competition with U2AF2. Inhibits the formation of the spliceosome A complex on intron 4 of TNNT2 pre-mRNA. Binds to the stem-loop structure within the polypyrimidine tract of TNNT2 intron 4 during spliceosome assembly. Binds to the 5'-YGCU(U/G)Y-3'consensus sequence. Binds to the IR RNA. Binds to CUG triplet repeat expansion in myotonic dystrophy muscle cells by sequestering the target RNAs. Together with RNA binding proteins RBPMS and RBFOX2, activates vascular smooth muscle cells alternative splicing events. Regulates NCOR2 alternative splicing. The chain is Muscleblind-like protein 1 (Mbnl1) from Mus musculus (Mouse).